The primary structure comprises 287 residues: Pyridoxal 5'-phosphate synthase subunit PdxS (287 aa).

Aspartate 21 serves as a coordination point for D-ribose 5-phosphate. The Schiff-base intermediate with D-ribose 5-phosphate role is filled by lysine 78. Glycine 150 provides a ligand contact to D-ribose 5-phosphate. Position 162 (arginine 162) interacts with D-glyceraldehyde 3-phosphate. D-ribose 5-phosphate is bound by residues glycine 211 and 232–233; that span reads GS.

It belongs to the PdxS/SNZ family. As to quaternary structure, in the presence of PdxT, forms a dodecamer of heterodimers.

It catalyses the reaction aldehydo-D-ribose 5-phosphate + D-glyceraldehyde 3-phosphate + L-glutamine = pyridoxal 5'-phosphate + L-glutamate + phosphate + 3 H2O + H(+). Its pathway is cofactor biosynthesis; pyridoxal 5'-phosphate biosynthesis. Its function is as follows. Catalyzes the formation of pyridoxal 5'-phosphate from ribose 5-phosphate (RBP), glyceraldehyde 3-phosphate (G3P) and ammonia. The ammonia is provided by the PdxT subunit. Can also use ribulose 5-phosphate and dihydroxyacetone phosphate as substrates, resulting from enzyme-catalyzed isomerization of RBP and G3P, respectively. The chain is Pyridoxal 5'-phosphate synthase subunit PdxS from Francisella philomiragia subsp. philomiragia (strain ATCC 25017 / CCUG 19701 / FSC 153 / O#319-036).